A 475-amino-acid chain; its full sequence is MNTALAQQIANEGGVEAWMIAQQHKSLLRFLTCGSVDDGKSTLIGRLLHDTRQIYEDQLSSLHNDSKRHGTQGEKLDLALLVDGLQAEREQGITIDVAYRYFSTEKRKFIIADTPGHEQYTRNMATGASTCELAILLIDARKGVLDQTRRHSFISTLLGIKHLVVAINKMDLVDYSEETFTRIREDYLTFAGQLPGNLDIRFVPLSALEGDNVASQSESMPWYSGPTLLEVLETVEIQRVVDAQPMRFPVQYVNRPNLDFRGYAGTLASGRVEVGQRVKVLPSGVESNVARIVTFDGDREEAFAGEAITLVLTDEIDISRGDLLLAADEALPAVQSASVDVVWMAEQPLSPGQSYDIKIAGKKTRSRVDGIRYQVDINNLTQREVENLPLNGIGLVDLTFDEPLVLDRYQQNPVTGGLIFIDRLSNVTVGAGMVHEPVSQATAAPSEFSAFELELNALVRRHFPHWGARDLLGEK.

The tr-type G domain maps to 25-239 (KSLLRFLTCG…EVLETVEIQR (215 aa)). A G1 region spans residues 34 to 41 (GSVDDGKS). 34-41 (GSVDDGKS) contributes to the GTP binding site. Residues 92–96 (GITID) are G2. Residues 113-116 (DTPG) are G3. Residues 113 to 117 (DTPGH) and 168 to 171 (NKMD) contribute to the GTP site. A G4 region spans residues 168–171 (NKMD). A G5 region spans residues 206–208 (SAL).

Belongs to the TRAFAC class translation factor GTPase superfamily. Classic translation factor GTPase family. CysN/NodQ subfamily. In terms of assembly, heterodimer composed of CysD, the smaller subunit, and CysN.

It catalyses the reaction sulfate + ATP + H(+) = adenosine 5'-phosphosulfate + diphosphate. It functions in the pathway sulfur metabolism; hydrogen sulfide biosynthesis; sulfite from sulfate: step 1/3. Its function is as follows. With CysD forms the ATP sulfurylase (ATPS) that catalyzes the adenylation of sulfate producing adenosine 5'-phosphosulfate (APS) and diphosphate, the first enzymatic step in sulfur assimilation pathway. APS synthesis involves the formation of a high-energy phosphoric-sulfuric acid anhydride bond driven by GTP hydrolysis by CysN coupled to ATP hydrolysis by CysD. The chain is Sulfate adenylyltransferase subunit 1 from Escherichia coli O157:H7.